Reading from the N-terminus, the 2314-residue chain is Protein Ycf2 (2314 aa).

Residue 1653-1660 (GSIGTGRS) participates in ATP binding.

The protein belongs to the Ycf2 family.

It is found in the plastid. The protein resides in the chloroplast stroma. Probable ATPase of unknown function. Its presence in a non-photosynthetic plant (Epifagus virginiana) and experiments in tobacco indicate that it has an essential function which is probably not related to photosynthesis. The sequence is that of Protein Ycf2 from Piper cenocladum (Ant piper).